We begin with the raw amino-acid sequence, 337 residues long: 5-formaminoimidazole-4-carboxamide-1-(beta)-D-ribofuranosyl 5'-monophosphate synthetase (337 aa).

Positions 14 and 74 each coordinate 5-amino-1-(5-phospho-beta-D-ribosyl)imidazole-4-carboxamide. An ATP-grasp domain is found at 81–328; the sequence is VELVERMKVP…IAREIRLAIE (248 aa). ATP is bound by residues 125–185 and E207; that span reads PDDI…VPVY. N235 is a binding site for 5-amino-1-(5-phospho-beta-D-ribosyl)imidazole-4-carboxamide. Mg(2+)-binding residues include E273 and E286.

The protein belongs to the phosphohexose mutase family. It depends on Mg(2+) as a cofactor. The cofactor is Mn(2+).

It catalyses the reaction 5-amino-1-(5-phospho-beta-D-ribosyl)imidazole-4-carboxamide + formate + ATP = 5-formamido-1-(5-phospho-D-ribosyl)imidazole-4-carboxamide + ADP + phosphate. The protein operates within purine metabolism; IMP biosynthesis via de novo pathway; 5-formamido-1-(5-phospho-D-ribosyl)imidazole-4-carboxamide from 5-amino-1-(5-phospho-D-ribosyl)imidazole-4-carboxamide (formate route): step 1/1. Its function is as follows. Catalyzes the ATP- and formate-dependent formylation of 5-aminoimidazole-4-carboxamide-1-beta-d-ribofuranosyl 5'-monophosphate (AICAR) to 5-formaminoimidazole-4-carboxamide-1-beta-d-ribofuranosyl 5'-monophosphate (FAICAR) in the absence of folates. This Pyrococcus abyssi (strain GE5 / Orsay) protein is 5-formaminoimidazole-4-carboxamide-1-(beta)-D-ribofuranosyl 5'-monophosphate synthetase.